Here is a 232-residue protein sequence, read N- to C-terminus: Lipoprotein-releasing system ATP-binding protein LolD (232 aa).

Residues 11–232 (IEVTDLQRAF…LHDGRLIEEY (222 aa)) form the ABC transporter domain. 47–54 (GPSGAGKS) serves as a coordination point for ATP.

Belongs to the ABC transporter superfamily. Lipoprotein translocase (TC 3.A.1.125) family. The complex is composed of two ATP-binding proteins (LolD) and two transmembrane proteins (LolC and LolE).

The protein resides in the cell inner membrane. Part of the ABC transporter complex LolCDE involved in the translocation of mature outer membrane-directed lipoproteins, from the inner membrane to the periplasmic chaperone, LolA. Responsible for the formation of the LolA-lipoprotein complex in an ATP-dependent manner. The chain is Lipoprotein-releasing system ATP-binding protein LolD from Zymomonas mobilis subsp. mobilis (strain ATCC 10988 / DSM 424 / LMG 404 / NCIMB 8938 / NRRL B-806 / ZM1).